The following is a 134-amino-acid chain: B3 domain-containing protein At1g16640 (134 aa).

A DNA-binding region (TF-B3) is located at residues 7-100 (VQFMKPFISE…TFYVIIYGHN (94 aa)).

Its subcellular location is the nucleus. The sequence is that of B3 domain-containing protein At1g16640 from Arabidopsis thaliana (Mouse-ear cress).